The sequence spans 430 residues: S-adenosylmethionine synthase (430 aa).

Residue His14 coordinates ATP. Asp16 contributes to the Mg(2+) binding site. A K(+)-binding site is contributed by Glu42. The L-methionine site is built by Glu55 and Gln98. The interval 98-108 (QSPDINRGVER) is flexible loop. ATP contacts are provided by residues 164–166 (DAK), 254–255 (KF), Asp263, 269–270 (RK), Ala286, and Lys290. Residue Asp263 participates in L-methionine binding. Lys294 is an L-methionine binding site.

It belongs to the AdoMet synthase family. In terms of assembly, homotetramer; dimer of dimers. The cofactor is Mg(2+). Requires K(+) as cofactor.

Its subcellular location is the cytoplasm. It carries out the reaction L-methionine + ATP + H2O = S-adenosyl-L-methionine + phosphate + diphosphate. It functions in the pathway amino-acid biosynthesis; S-adenosyl-L-methionine biosynthesis; S-adenosyl-L-methionine from L-methionine: step 1/1. Functionally, catalyzes the formation of S-adenosylmethionine (AdoMet) from methionine and ATP. The overall synthetic reaction is composed of two sequential steps, AdoMet formation and the subsequent tripolyphosphate hydrolysis which occurs prior to release of AdoMet from the enzyme. The polypeptide is S-adenosylmethionine synthase (Bacteroides thetaiotaomicron (strain ATCC 29148 / DSM 2079 / JCM 5827 / CCUG 10774 / NCTC 10582 / VPI-5482 / E50)).